The following is a 636-amino-acid chain: 1-deoxy-D-xylulose-5-phosphate synthase (636 aa).

Thiamine diphosphate-binding positions include His72 and 113-115; that span reads GHA. A Mg(2+)-binding site is contributed by Asp144. Residues 145–146, Asn174, Tyr287, and Glu370 contribute to the thiamine diphosphate site; that span reads GA. Asn174 serves as a coordination point for Mg(2+).

This sequence belongs to the transketolase family. DXPS subfamily. Homodimer. The cofactor is Mg(2+). Requires thiamine diphosphate as cofactor.

The enzyme catalyses D-glyceraldehyde 3-phosphate + pyruvate + H(+) = 1-deoxy-D-xylulose 5-phosphate + CO2. Its pathway is metabolic intermediate biosynthesis; 1-deoxy-D-xylulose 5-phosphate biosynthesis; 1-deoxy-D-xylulose 5-phosphate from D-glyceraldehyde 3-phosphate and pyruvate: step 1/1. Functionally, catalyzes the acyloin condensation reaction between C atoms 2 and 3 of pyruvate and glyceraldehyde 3-phosphate to yield 1-deoxy-D-xylulose-5-phosphate (DXP). In Microcystis aeruginosa (strain NIES-843 / IAM M-2473), this protein is 1-deoxy-D-xylulose-5-phosphate synthase.